Reading from the N-terminus, the 88-residue chain is Phosphocarrier protein HPr (88 aa).

The HPr domain maps to 1-88 (MVVKTVRVLN…RLFQNKFEEE (88 aa)). The Pros-phosphohistidine intermediate role is filled by His15. The residue at position 46 (Ser46) is a Phosphoserine; by HPrK/P.

This sequence belongs to the HPr family.

It is found in the cytoplasm. Its activity is regulated as follows. Phosphorylation on Ser-46 inhibits the phosphoryl transfer from enzyme I to HPr. Functionally, general (non sugar-specific) component of the phosphoenolpyruvate-dependent sugar phosphotransferase system (sugar PTS). This major carbohydrate active-transport system catalyzes the phosphorylation of incoming sugar substrates concomitantly with their translocation across the cell membrane. The phosphoryl group from phosphoenolpyruvate (PEP) is transferred to the phosphoryl carrier protein HPr by enzyme I. Phospho-HPr then transfers it to the PTS EIIA domain. The polypeptide is Phosphocarrier protein HPr (ptsH) (Treponema pallidum (strain Nichols)).